We begin with the raw amino-acid sequence, 150 residues long: MTDQVLAEQRIGQNTEVTLHFALRLENGDTVDSTFDKAPATFKVGDGNLLPGFEAALFGFKAGDKRTLQILPENAFGQPNPQNVQIIPRSQFQNMDLSEGLLVIFNDAANTELPGVVKAFDDAQVTIDFNHPLAGKTLTFDVEIIDVKAL.

In terms of domain architecture, PPIase FKBP-type spans 14–88; it reads NTEVTLHFAL…PNPQNVQIIP (75 aa).

This sequence belongs to the FKBP-type PPIase family.

It carries out the reaction [protein]-peptidylproline (omega=180) = [protein]-peptidylproline (omega=0). In terms of biological role, PPIases accelerate the folding of proteins. This is Probable FKBP-type 16 kDa peptidyl-prolyl cis-trans isomerase (yaaD) from Pseudomonas fluorescens.